Here is a 46-residue protein sequence, read N- to C-terminus: Protein PsbN (46 aa).

Residues 10 to 30 traverse the membrane as a helical segment; sequence IAITILIVLLGLTAFGVYTAF.

Belongs to the PsbN family.

It is found in the cellular thylakoid membrane. Its function is as follows. May play a role in photosystem I and II biogenesis. The sequence is that of Protein PsbN from Prochlorococcus marinus (strain SARG / CCMP1375 / SS120).